The chain runs to 71 residues: Cold shock-like protein CspB (71 aa).

The CSD domain maps to 7–67; the sequence is GLVKWFNADK…GAKGPAAANV (61 aa).

It localises to the cytoplasm. The sequence is that of Cold shock-like protein CspB (cspB) from Escherichia coli (strain K12).